The following is a 303-amino-acid chain: Ribosomal protein L11 methyltransferase (303 aa).

S-adenosyl-L-methionine is bound by residues Thr144, Gly165, Asp187, and Asn235.

It belongs to the methyltransferase superfamily. PrmA family.

The protein localises to the cytoplasm. It carries out the reaction L-lysyl-[protein] + 3 S-adenosyl-L-methionine = N(6),N(6),N(6)-trimethyl-L-lysyl-[protein] + 3 S-adenosyl-L-homocysteine + 3 H(+). In terms of biological role, methylates ribosomal protein L11. The polypeptide is Ribosomal protein L11 methyltransferase (Prochlorococcus marinus (strain MIT 9312)).